A 166-amino-acid polypeptide reads, in one-letter code: Urease accessory protein UreE (166 aa).

The interval 135-156 (EQGAYGGGHHHSHHGDEEFNYG) is disordered.

Belongs to the UreE family.

It is found in the cytoplasm. Its function is as follows. Involved in urease metallocenter assembly. Binds nickel. Probably functions as a nickel donor during metallocenter assembly. This Ectopseudomonas mendocina (strain ymp) (Pseudomonas mendocina) protein is Urease accessory protein UreE.